Here is a 186-residue protein sequence, read N- to C-terminus: Acetyltransferase PA5475 (186 aa).

The N-acetyltransferase domain occupies 31 to 186 (VLIRPLREED…STQVIHRLAL (156 aa)). CoA-binding positions include 117–119 (VTI), Gly125, Asn156, and 161–163 (DLC).

Its function is as follows. Catalyzes the transfer of an acetyl group from acetyl coenzyme A (AcCoA) to an acceptor substrate and releases both CoA and the acetylated product. It prefers the antibiotic chloramphenicol. The polypeptide is Acetyltransferase PA5475 (Pseudomonas aeruginosa (strain ATCC 15692 / DSM 22644 / CIP 104116 / JCM 14847 / LMG 12228 / 1C / PRS 101 / PAO1)).